The sequence spans 382 residues: Alkanesulfonate monooxygenase (382 aa).

This sequence belongs to the SsuD family. In terms of assembly, homotetramer.

The catalysed reaction is an alkanesulfonate + FMNH2 + O2 = an aldehyde + FMN + sulfite + H2O + 2 H(+). In terms of biological role, catalyzes the desulfonation of aliphatic sulfonates. The sequence is that of Alkanesulfonate monooxygenase from Yersinia pestis bv. Antiqua (strain Antiqua).